The sequence spans 266 residues: uncharacterized protein (266 aa).

The next 8 helical transmembrane spans lie at 9 to 29 (IAAL…LFIF), 37 to 57 (TMPH…LVFY), 69 to 89 (LIKV…ISLL), 123 to 143 (FLLM…MIFT), 153 to 173 (YNPF…LVIA), 184 to 204 (LPLA…LFLL), 216 to 236 (SVFA…ILIL), and 246 to 266 (TNSL…MVFV).

It is found in the cell membrane. This is an uncharacterized protein from Haemophilus influenzae (strain ATCC 51907 / DSM 11121 / KW20 / Rd).